We begin with the raw amino-acid sequence, 371 residues long: Aminomethyltransferase (371 aa).

This sequence belongs to the GcvT family. As to quaternary structure, the glycine cleavage system is composed of four proteins: P, T, L and H.

The catalysed reaction is N(6)-[(R)-S(8)-aminomethyldihydrolipoyl]-L-lysyl-[protein] + (6S)-5,6,7,8-tetrahydrofolate = N(6)-[(R)-dihydrolipoyl]-L-lysyl-[protein] + (6R)-5,10-methylene-5,6,7,8-tetrahydrofolate + NH4(+). Its function is as follows. The glycine cleavage system catalyzes the degradation of glycine. The sequence is that of Aminomethyltransferase from Leptospira interrogans serogroup Icterohaemorrhagiae serovar Lai (strain 56601).